Reading from the N-terminus, the 250-residue chain is Small ribosomal subunit protein uS3 (250 aa).

The KH type-2 domain occupies 39–111 (IRTLIKNHYP…KVQINIFEVK (73 aa)).

It belongs to the universal ribosomal protein uS3 family. Part of the 30S ribosomal subunit. Forms a tight complex with proteins S10 and S14.

Its function is as follows. Binds the lower part of the 30S subunit head. Binds mRNA in the 70S ribosome, positioning it for translation. This chain is Small ribosomal subunit protein uS3, found in Phytoplasma vitis (Flavescence doree phytoplasma).